Here is a 110-residue protein sequence, read N- to C-terminus: Large ribosomal subunit protein bL20 (110 aa).

Belongs to the bacterial ribosomal protein bL20 family.

Its function is as follows. Binds directly to 23S ribosomal RNA and is necessary for the in vitro assembly process of the 50S ribosomal subunit. It is not involved in the protein synthesizing functions of that subunit. This chain is Large ribosomal subunit protein bL20, found in Shigella boydii serotype 4 (strain Sb227).